Reading from the N-terminus, the 157-residue chain is MNYKERRQLIYELIQTNKIETQEQLLLLLQAHGANATQATISRDIRALHISKVPDDDGRSYYVKAPSAAVNRERQLKDAIRERVATVTAVQFTVVIQTSMKLTYAPILAGLIDDIDNDDVVGTIAGTDTLLVILKDAEAAASFADWAQAIVKERKIY.

Belongs to the ArgR family.

The protein resides in the cytoplasm. It participates in amino-acid biosynthesis; L-arginine biosynthesis [regulation]. Functionally, regulates arginine biosynthesis genes. The chain is Arginine repressor from Lactobacillus delbrueckii subsp. bulgaricus (strain ATCC 11842 / DSM 20081 / BCRC 10696 / JCM 1002 / NBRC 13953 / NCIMB 11778 / NCTC 12712 / WDCM 00102 / Lb 14).